Here is a 100-residue protein sequence, read N- to C-terminus: Aspartyl/glutamyl-tRNA(Asn/Gln) amidotransferase subunit C (100 aa).

This sequence belongs to the GatC family. As to quaternary structure, heterotrimer of A, B and C subunits.

The enzyme catalyses L-glutamyl-tRNA(Gln) + L-glutamine + ATP + H2O = L-glutaminyl-tRNA(Gln) + L-glutamate + ADP + phosphate + H(+). It carries out the reaction L-aspartyl-tRNA(Asn) + L-glutamine + ATP + H2O = L-asparaginyl-tRNA(Asn) + L-glutamate + ADP + phosphate + 2 H(+). Functionally, allows the formation of correctly charged Asn-tRNA(Asn) or Gln-tRNA(Gln) through the transamidation of misacylated Asp-tRNA(Asn) or Glu-tRNA(Gln) in organisms which lack either or both of asparaginyl-tRNA or glutaminyl-tRNA synthetases. The reaction takes place in the presence of glutamine and ATP through an activated phospho-Asp-tRNA(Asn) or phospho-Glu-tRNA(Gln). This is Aspartyl/glutamyl-tRNA(Asn/Gln) amidotransferase subunit C from Staphylococcus saprophyticus subsp. saprophyticus (strain ATCC 15305 / DSM 20229 / NCIMB 8711 / NCTC 7292 / S-41).